The primary structure comprises 295 residues: Ribosomal protein L11 methyltransferase (295 aa).

S-adenosyl-L-methionine is bound by residues T146, G167, D189, and N231.

Belongs to the methyltransferase superfamily. PrmA family.

The protein resides in the cytoplasm. It catalyses the reaction L-lysyl-[protein] + 3 S-adenosyl-L-methionine = N(6),N(6),N(6)-trimethyl-L-lysyl-[protein] + 3 S-adenosyl-L-homocysteine + 3 H(+). Its function is as follows. Methylates ribosomal protein L11. The sequence is that of Ribosomal protein L11 methyltransferase from Vibrio vulnificus (strain CMCP6).